A 428-amino-acid chain; its full sequence is Elongation factor 1-alpha (428 aa).

The 211-residue stretch at 5 to 215 folds into the tr-type G domain; that stretch reads KPHVNIVFIG…ALDQIPEPPK (211 aa). The segment at 14–21 is G1; the sequence is GHVDHGKS. 14–21 is a binding site for GTP; sequence GHVDHGKS. Residue S21 participates in Mg(2+) binding. A G2 region spans residues 68 to 72; the sequence is GITID. Residues 89 to 92 are G3; sequence DAPG. GTP contacts are provided by residues 89 to 93 and 144 to 147; these read DAPGH and NKMD. Residues 144–147 are G4; that stretch reads NKMD. Residues 181 to 183 are G5; it reads SAW.

Belongs to the TRAFAC class translation factor GTPase superfamily. Classic translation factor GTPase family. EF-Tu/EF-1A subfamily.

The protein localises to the cytoplasm. It carries out the reaction GTP + H2O = GDP + phosphate + H(+). Its function is as follows. GTP hydrolase that promotes the GTP-dependent binding of aminoacyl-tRNA to the A-site of ribosomes during protein biosynthesis. The protein is Elongation factor 1-alpha of Thermococcus kodakarensis (strain ATCC BAA-918 / JCM 12380 / KOD1) (Pyrococcus kodakaraensis (strain KOD1)).